The following is a 208-amino-acid chain: Large ribosomal subunit protein uL4 (208 aa).

The disordered stretch occupies residues 58 to 77; that stretch reads RGGGRKPWRQKGTGRARQGS. Positions 60–71 are enriched in basic residues; it reads GGRKPWRQKGTG.

This sequence belongs to the universal ribosomal protein uL4 family. Part of the 50S ribosomal subunit.

In terms of biological role, one of the primary rRNA binding proteins, this protein initially binds near the 5'-end of the 23S rRNA. It is important during the early stages of 50S assembly. It makes multiple contacts with different domains of the 23S rRNA in the assembled 50S subunit and ribosome. Functionally, forms part of the polypeptide exit tunnel. The chain is Large ribosomal subunit protein uL4 from Caldicellulosiruptor bescii (strain ATCC BAA-1888 / DSM 6725 / KCTC 15123 / Z-1320) (Anaerocellum thermophilum).